The primary structure comprises 416 residues: Serine hydroxymethyltransferase (416 aa).

Residues leucine 120 and 124-126 (GHL) each bind (6S)-5,6,7,8-tetrahydrofolate. An N6-(pyridoxal phosphate)lysine modification is found at lysine 230. Glutamate 246 is a (6S)-5,6,7,8-tetrahydrofolate binding site.

This sequence belongs to the SHMT family. Homodimer. It depends on pyridoxal 5'-phosphate as a cofactor.

The protein localises to the cytoplasm. The enzyme catalyses (6R)-5,10-methylene-5,6,7,8-tetrahydrofolate + glycine + H2O = (6S)-5,6,7,8-tetrahydrofolate + L-serine. The protein operates within one-carbon metabolism; tetrahydrofolate interconversion. It participates in amino-acid biosynthesis; glycine biosynthesis; glycine from L-serine: step 1/1. Catalyzes the reversible interconversion of serine and glycine with tetrahydrofolate (THF) serving as the one-carbon carrier. This reaction serves as the major source of one-carbon groups required for the biosynthesis of purines, thymidylate, methionine, and other important biomolecules. Also exhibits THF-independent aldolase activity toward beta-hydroxyamino acids, producing glycine and aldehydes, via a retro-aldol mechanism. The sequence is that of Serine hydroxymethyltransferase from Onion yellows phytoplasma (strain OY-M).